The sequence spans 385 residues: UPF0764 protein C16orf89 homolog (385 aa).

The first 20 residues, 1 to 20 (MARLGLLLLLLLALPPHFSS), serve as a signal peptide directing secretion. Positions 344 to 385 (AHPEYYPNHGDPYSSSQSPASNYQDGAAGPDVQRTGRPLSVS) are disordered. The segment covering 356–367 (YSSSQSPASNYQ) has biased composition (polar residues).

Belongs to the UPF0764 family. In terms of assembly, homodimer. Glycosylated. Predominantly expressed in thyroid tissue.

Its subcellular location is the secreted. The protein is UPF0764 protein C16orf89 homolog of Mus musculus (Mouse).